A 1076-amino-acid chain; its full sequence is Bifunctional glutamine synthetase adenylyltransferase/adenylyl-removing enzyme (1076 aa).

Residues methionine 1–methionine 521 form an adenylyl removase region. The tract at residues valine 524–arginine 1076 is adenylyl transferase. Residues alanine 1041 to proline 1056 show a composition bias toward low complexity. Positions alanine 1041 to arginine 1076 are disordered.

Belongs to the GlnE family. Mg(2+) is required as a cofactor.

It catalyses the reaction [glutamine synthetase]-O(4)-(5'-adenylyl)-L-tyrosine + phosphate = [glutamine synthetase]-L-tyrosine + ADP. The enzyme catalyses [glutamine synthetase]-L-tyrosine + ATP = [glutamine synthetase]-O(4)-(5'-adenylyl)-L-tyrosine + diphosphate. Its function is as follows. Involved in the regulation of glutamine synthetase GlnA, a key enzyme in the process to assimilate ammonia. When cellular nitrogen levels are high, the C-terminal adenylyl transferase (AT) inactivates GlnA by covalent transfer of an adenylyl group from ATP to specific tyrosine residue of GlnA, thus reducing its activity. Conversely, when nitrogen levels are low, the N-terminal adenylyl removase (AR) activates GlnA by removing the adenylyl group by phosphorolysis, increasing its activity. The regulatory region of GlnE binds the signal transduction protein PII (GlnB) which indicates the nitrogen status of the cell. This is Bifunctional glutamine synthetase adenylyltransferase/adenylyl-removing enzyme from Bifidobacterium longum subsp. infantis (strain ATCC 15697 / DSM 20088 / JCM 1222 / NCTC 11817 / S12).